A 263-amino-acid polypeptide reads, in one-letter code: tRNA pseudouridine synthase A (263 aa).

Catalysis depends on Asp51, which acts as the Nucleophile. Residue Tyr106 participates in substrate binding.

It belongs to the tRNA pseudouridine synthase TruA family.

It catalyses the reaction uridine(38/39/40) in tRNA = pseudouridine(38/39/40) in tRNA. In terms of biological role, formation of pseudouridine at positions 38, 39 and 40 in the anticodon stem and loop of transfer RNAs. The sequence is that of tRNA pseudouridine synthase A from Pyrococcus abyssi (strain GE5 / Orsay).